We begin with the raw amino-acid sequence, 538 residues long: Phosphoenolpyruvate carboxykinase (ATP) (538 aa).

A substrate-binding site is contributed by arginine 64. Arginine 152 is an ATP binding site. 2 residues coordinate substrate: tyrosine 205 and lysine 211. ATP contacts are provided by residues lysine 211, histidine 230, and 246-254 (GLSGTGKTT). 2 residues coordinate Mn(2+): lysine 211 and histidine 230. Aspartate 267 is a binding site for Mn(2+). Residues glutamate 295, arginine 331, arginine 344, 447 to 448 (RI), and threonine 453 contribute to the ATP site. Arginine 331 is a substrate binding site.

It belongs to the phosphoenolpyruvate carboxykinase (ATP) family. In terms of assembly, monomer. Mn(2+) is required as a cofactor.

It is found in the cytoplasm. It carries out the reaction oxaloacetate + ATP = phosphoenolpyruvate + ADP + CO2. It participates in carbohydrate biosynthesis; gluconeogenesis. Its function is as follows. Involved in gluconeogenesis. Catalyzes the conversion of oxaloacetate (OAA) to phosphoenolpyruvate (PEP) through direct phosphoryl transfer between the nucleoside triphosphate and OAA. The chain is Phosphoenolpyruvate carboxykinase (ATP) from Actinobacillus succinogenes (strain ATCC 55618 / DSM 22257 / CCUG 43843 / 130Z).